A 1106-amino-acid polypeptide reads, in one-letter code: Zinc finger protein GLI1 (1106 aa).

Residues 1–20 (MFNSMTPPPISSYGEPCCLR) are SNAG domain. Residues 120–124 (SYGHL) are interaction with SUFU. 5 C2H2-type zinc fingers span residues 235–260 (TDCRWDGCSQEFDSQEQLVHHINSEH), 268–295 (FVCHWGGCSRELRPFKAQYMLVVHMRRH), 301–325 (HKCTFEGCRKSYSRLENLKTHLRSH), 331–356 (YMCEHEGCSKAFSNASDRAKHQNRTH), and 362–387 (YVCKLPGCTKRYTDPSSLRKHVKTVH). Positions 283–291 (KAQYMLVVH) are interaction with DNA. Interaction with DNA regions lie at residues 345-350 (ASDRAK) and 375-381 (DPSSLRK). Disordered stretches follow at residues 375 to 485 (DPSS…DEGP), 516 to 580 (GLKL…SLPG), 732 to 792 (YGGP…LYPG), 817 to 889 (EQGC…PTHS), and 914 to 942 (GREDAPAQEPSYQSPKFLGGSQVSPSRAK). Residues 413 to 428 (EPKREREGGPIREESR) show a composition bias toward basic and acidic residues. The span at 442-463 (PGAQSSCSSDHSPAGSAANTDS) shows a compositional bias: polar residues. Position 518 is an N6-acetyllysine (Lys518). 2 stretches are compositionally biased toward low complexity: residues 544–560 (SSSSSISSAYTVSRRSS) and 737–753 (GAAAEPYGARGPGSLPL). The segment covering 754-766 (GPGPPTNYGPNPC) has biased composition (pro residues). The span at 768–779 (QQASYPDPTQET) shows a compositional bias: polar residues. Residue Lys1003 forms a Glycyl lysine isopeptide (Lys-Gly) (interchain with G-Cter in SUMO2) linkage. The disordered stretch occupies residues 1054–1087 (DEPQGLSPPPSHDQRGSSGHTPPPSGPPNMAVGN).

This sequence belongs to the GLI C2H2-type zinc-finger protein family. As to quaternary structure, interacts with KIF7. Interacts with STK36. Interacts with ZIC1; the interaction enhances transcription activation. Interacts with SUFU; this inhibits transcriptional activation by GLI1. Phosphorylated in vitro by ULK3. In terms of processing, acetylation at Lys-518 down-regulates transcriptional activity. Deacetylated by HDAC1. Post-translationally, ubiquitinated by the CRL2(FEM1B) complex, suppressing GLI1 transcriptional activator activity. As to expression, detected in testis (at protein level). Testis, myometrium and fallopian tube. Also expressed in the brain with highest expression in the cerebellum, optic nerve and olfactory tract. Isoform 1 is detected in brain, spleen, pancreas, liver, kidney and placenta; isoform 2 is not detectable in these tissues.

It localises to the cytoplasm. Its subcellular location is the nucleus. In terms of biological role, acts as a transcriptional activator. Binds to the DNA consensus sequence 5'-GACCACCCA-3'. Regulates the transcription of specific genes during normal development. Plays a role in craniofacial development and digital development, as well as development of the central nervous system and gastrointestinal tract. Mediates SHH signaling. Plays a role in cell proliferation and differentiation via its role in SHH signaling. Its function is as follows. Acts as a transcriptional activator, but activates a different set of genes than isoform 1. Activates expression of CD24, unlike isoform 1. Mediates SHH signaling. Promotes cancer cell migration. The sequence is that of Zinc finger protein GLI1 (GLI1) from Homo sapiens (Human).